A 231-amino-acid polypeptide reads, in one-letter code: Large ribosomal subunit protein uL1 (231 aa).

It belongs to the universal ribosomal protein uL1 family. Part of the 50S ribosomal subunit.

Functionally, binds directly to 23S rRNA. The L1 stalk is quite mobile in the ribosome, and is involved in E site tRNA release. Its function is as follows. Protein L1 is also a translational repressor protein, it controls the translation of the L11 operon by binding to its mRNA. This is Large ribosomal subunit protein uL1 from Acinetobacter baylyi (strain ATCC 33305 / BD413 / ADP1).